Here is a 179-residue protein sequence, read N- to C-terminus: SCAN domain-containing protein 1 (179 aa).

The segment at 1-104 (MAATEPILAA…PGPAGSRLGP (104 aa)) is disordered. Over residues 52 to 80 (SPNAAVPEAIPTPRAAASAALELPLGPAP) the composition is skewed to low complexity. One can recognise an SCAN box domain in the interval 108–166 (RQRFRQFRYQDAAGPREAFRQLRELSRQWLRPDIRTKEQIVEMLVQEQLLAILPEAARA).

As to quaternary structure, interacts with ZNF202.

The protein localises to the nucleus. May regulate transcriptional activity. The protein is SCAN domain-containing protein 1 (SCAND1) of Homo sapiens (Human).